Consider the following 239-residue polypeptide: Phosducin-like protein 2 (239 aa).

Positions 26–87 form a coiled coil; sequence TEDELFDLIK…IQQMKVEAEL (62 aa). The Phosducin domain occupies 36–196; that stretch reads EAAEMATEAE…TTVNDIEWQL (161 aa). Residues 42–59 are compositionally biased toward basic and acidic residues; the sequence is TEAEKNEKLENASLKDLK. Disordered stretches follow at residues 42 to 64 and 212 to 239; these read TEAE…MEDD and ITLA…DSDD. The tract at residues 90–239 is thioredoxin fold; the sequence is FGELKEISEP…DESDNSDSDD (150 aa). The segment covering 214–224 has biased composition (basic residues); that stretch reads LARKKSQKSRY. Positions 230–239 are enriched in acidic residues; sequence DESDNSDSDD.

This sequence belongs to the phosducin family.

In Dictyostelium discoideum (Social amoeba), this protein is Phosducin-like protein 2 (phlp2).